The primary structure comprises 119 residues: MICOS complex subunit MIC13 (119 aa).

Over 1-7 (MVARVWS) the chain is Mitochondrial matrix. Residues 8–26 (LMRFLIKGSVAGGAVYLVY) form a helical membrane-spanning segment. The Mitochondrial intermembrane segment spans residues 27-119 (DQELLGPSDK…GWEYLKEHSK (93 aa)).

This sequence belongs to the MICOS complex subunit Mic13 family. As to quaternary structure, component of the mitochondrial contact site and cristae organizing system (MICOS) complex, composed of at least MICOS10/MIC10, CHCHD3/MIC19, CHCHD6/MIC25, APOO/MIC26, MICOS13/MIC13, APOOL/MIC27 and IMMT/MIC60. The MICOS complex associates with mitochondrial outer membrane proteins SAMM50, MTX1 and MTX2 (together described as components of the mitochondrial outer membrane sorting assembly machinery (SAM) complex) and DNAJC11, mitochondrial inner membrane protein TMEM11 and with HSPA9. The MICOS and SAM complexes together with DNAJC11 are part of a large protein complex spanning both membranes termed the mitochondrial intermembrane space bridging (MIB) complex.

It is found in the mitochondrion inner membrane. In terms of biological role, component of the MICOS complex, a large protein complex of the mitochondrial inner membrane that plays crucial roles in the maintenance of crista junctions, inner membrane architecture, and formation of contact sites to the outer membrane. Constituent of mature MICOS complex, it is required for the formation of cristae junction (CJ) and maintenance of cristae morphology. Required for the incorporation of MICOS10/MIC10 into the MICOS complex. This Mus musculus (Mouse) protein is MICOS complex subunit MIC13 (Micos13).